The primary structure comprises 249 residues: Carbohydrate deacetylase (249 aa).

2 residues coordinate Mg(2+): histidine 60 and histidine 125.

This sequence belongs to the YdjC deacetylase family. In terms of assembly, homodimer. Mg(2+) serves as cofactor.

Probably catalyzes the deacetylation of acetylated carbohydrates an important step in the degradation of oligosaccharides. The polypeptide is Carbohydrate deacetylase (Thermoanaerobacter pseudethanolicus (strain ATCC 33223 / 39E) (Clostridium thermohydrosulfuricum)).